The sequence spans 447 residues: MGKEKIHISIVVIGHVDSGKSTTTGHLIYKLGGIDKRVIERFEKEAAEMNKRSFKYAWVLDKLKAERERGITIDIALWKFETTKYSCTVIDAPGHRDFIKNMITGTSQADCAVLIIDSTTGVFQAGISKDGQTREHALLAFTLGVKQMICCCNKMDATTPKYSKSRYDEIVKEVSSYLKKVGYNPDKVPFVPISGFEGDNMIERSSNLDWYKGPTLLEALDQINEPKRPSDKPLHLPLQDVYKIGGIGTVPVGRVETGVIKPGMVVTFGPTGLTTEVKSVEVHHESLLEALPGDNVGFNVKNVAVKDLKRGYVASNSKDDPAKEAANFTAQVIIMNHPGQISNGYAPVLDCHTSHIAVKFAEIQTKIDRRSGKELEAAPKFLKNGDAGFVKMIPTKPMVVETFAQYPPLGRFAVRDMRQTVAVGVIKSVEKKEPTGAKVTKAAIKKK.

One can recognise a tr-type G domain in the interval 5 to 230; the sequence is KIHISIVVIG…DQINEPKRPS (226 aa). The interval 14-21 is G1; sequence GHVDSGKS. 14-21 provides a ligand contact to GTP; it reads GHVDSGKS. Lys-55 carries the N6,N6-dimethyllysine modification. A G2 region spans residues 70–74; that stretch reads GITID. At Lys-79 the chain carries N6,N6,N6-trimethyllysine. Residues 91–94 form a G3 region; the sequence is DAPG. GTP-binding positions include 91–95 and 153–156; these read DAPGH and NKMD. Positions 153–156 are G4; the sequence is NKMD. Lys-187 is modified (N6,N6,N6-trimethyllysine). Positions 194–196 are G5; it reads SGF. Lys-261 carries the post-translational modification N6-methyllysine. Position 289 is a 5-glutamyl glycerylphosphorylethanolamine (Glu-289). An N6,N6,N6-trimethyllysine modification is found at Lys-306. Residue Glu-362 is modified to 5-glutamyl glycerylphosphorylethanolamine. Residue Lys-396 is modified to N6,N6,N6-trimethyllysine.

This sequence belongs to the TRAFAC class translation factor GTPase superfamily. Classic translation factor GTPase family. EF-Tu/EF-1A subfamily.

Its subcellular location is the cytoplasm. Its function is as follows. This protein promotes the GTP-dependent binding of aminoacyl-tRNA to the A-site of ribosomes during protein biosynthesis. This Hordeum vulgare (Barley) protein is Elongation factor 1-alpha.